We begin with the raw amino-acid sequence, 1414 residues long: DNA-directed RNA polymerase subunit beta' (1414 aa).

Residues cysteine 70, cysteine 72, cysteine 85, and cysteine 88 each contribute to the Zn(2+) site. The Mg(2+) site is built by aspartate 460, aspartate 462, and aspartate 464. Residues cysteine 814, cysteine 888, cysteine 895, and cysteine 898 each contribute to the Zn(2+) site. The span at 1392–1403 shows a compositional bias: low complexity; that stretch reads EQALSEALKSSA. Residues 1392–1414 are disordered; that stretch reads EQALSEALKSSAPQEAKAAQKDE.

This sequence belongs to the RNA polymerase beta' chain family. The RNAP catalytic core consists of 2 alpha, 1 beta, 1 beta' and 1 omega subunit. When a sigma factor is associated with the core the holoenzyme is formed, which can initiate transcription. Mg(2+) is required as a cofactor. The cofactor is Zn(2+).

The catalysed reaction is RNA(n) + a ribonucleoside 5'-triphosphate = RNA(n+1) + diphosphate. In terms of biological role, DNA-dependent RNA polymerase catalyzes the transcription of DNA into RNA using the four ribonucleoside triphosphates as substrates. In Coxiella burnetii (strain RSA 331 / Henzerling II), this protein is DNA-directed RNA polymerase subunit beta'.